The following is a 91-amino-acid chain: Large ribosomal subunit protein bL31B (91 aa).

Belongs to the bacterial ribosomal protein bL31 family. Type B subfamily. Part of the 50S ribosomal subunit.

The sequence is that of Large ribosomal subunit protein bL31B from Neisseria meningitidis serogroup B (strain ATCC BAA-335 / MC58).